A 1483-amino-acid chain; its full sequence is Chromosome partition protein MukB (1483 aa).

An ATP-binding site is contributed by 34–41; the sequence is GGNGAGKS. Coiled coils occupy residues 326–418, 444–480, 509–601, 780–804, 837–923, 977–1115, and 1209–1265; these read LEAD…QYNQ, LETF…QAYQ, RHLA…MQRA, RAAC…FATL, EIRQ…AKLE, EMLS…TAKA, and VEAI…LQNV. The segment at 666–783 is flexible hinge; the sequence is PGGSEDQRLN…EVPLFGRAAC (118 aa).

This sequence belongs to the SMC family. MukB subfamily. In terms of assembly, homodimerization via its hinge domain. Binds to DNA via its C-terminal region. Interacts, and probably forms a ternary complex, with MukE and MukF via its C-terminal region. The complex formation is stimulated by calcium or magnesium. Interacts with tubulin-related protein FtsZ.

The protein resides in the cytoplasm. The protein localises to the nucleoid. Its function is as follows. Plays a central role in chromosome condensation, segregation and cell cycle progression. Functions as a homodimer, which is essential for chromosome partition. Involved in negative DNA supercoiling in vivo, and by this means organize and compact chromosomes. May achieve or facilitate chromosome segregation by condensation DNA from both sides of a centrally located replisome during cell division. This is Chromosome partition protein MukB from Shigella dysenteriae serotype 1 (strain Sd197).